The following is a 459-amino-acid chain: Chromosomal replication initiator protein DnaA (459 aa).

Residues 1 to 73 are domain I, interacts with DnaA modulators; that stretch reads MEIPIESLWS…AHAVQDILGH (73 aa). The interval 73–117 is domain II; the sequence is HPVGIYITVAQGDEVSHFSEREVSWESTNPSSIPESLPHHNHKTT. Positions 118–334 are domain III, AAA+ region; that stretch reads ELNSKYVFSR…GALIRAVAYI (217 aa). Glycine 162, glycine 164, lysine 165, and threonine 166 together coordinate ATP. Positions 335–459 are domain IV, binds dsDNA; that stretch reads SIWGLPMTVE…INMTSRSQKS (125 aa).

This sequence belongs to the DnaA family. Oligomerizes as a right-handed, spiral filament on DNA at oriC.

Its subcellular location is the cytoplasm. Its function is as follows. Plays an essential role in the initiation and regulation of chromosomal replication. ATP-DnaA binds to the origin of replication (oriC) to initiate formation of the DNA replication initiation complex once per cell cycle. Binds the DnaA box (a 9 base pair repeat at the origin) and separates the double-stranded (ds)DNA. Forms a right-handed helical filament on oriC DNA; dsDNA binds to the exterior of the filament while single-stranded (ss)DNA is stabiized in the filament's interior. The ATP-DnaA-oriC complex binds and stabilizes one strand of the AT-rich DNA unwinding element (DUE), permitting loading of DNA polymerase. After initiation quickly degrades to an ADP-DnaA complex that is not apt for DNA replication. Binds acidic phospholipids. The protein is Chromosomal replication initiator protein DnaA of Nostoc punctiforme (strain ATCC 29133 / PCC 73102).